The chain runs to 478 residues: Early growth response protein 4 (478 aa).

Positions 15-37 are disordered; it reads SKPTEGCAHTSPELPRLPARDAP. C2H2-type zinc fingers lie at residues 372–396, 402–424, and 430–452; these read FACPVESCVRTFARSDELNRHLRIH, FQCRICLRNFSRSDHLTTHVRTH, and FACDVCGRRFARSDEKKRHSKVH.

It belongs to the EGR C2H2-type zinc-finger protein family.

The protein resides in the nucleus. Its function is as follows. Transcriptional regulator. Recognizes and binds to the DNA sequence 5'-GCGGGGGCG-3' (GSG). Activates the transcription of target genes whose products are required for mitogenesis and differentiation. This chain is Early growth response protein 4 (Egr4), found in Rattus norvegicus (Rat).